Reading from the N-terminus, the 379-residue chain is MGAFFPVILLTPTPISSAHNLYLFQMLELQENITDSQPMDPPSLEIMMLHHLMIILVTLFGNTLLIYVIYKNNAVLRRKRVTPVQMLMLHMCAADILFALISVGPTMAITATVPFFYGPNLLCKLTKFLQVIPMYASSFLLVAISADRYQAICRPLASMKSSIYNRPALYSGIAWTAAILFSTPQLYLFEKRNGDCSENYTTALQYQLYVCLFNSVVWLLPSAIAGWLYLCVCKAVWKSTSFSSSLRNNMKKMEHMKLTEKNGGMQAHHKGATMQCVELDRRRVQTVKLTLTIVAANFVLWAPFCITSVIDAVWPTAINSTFATYIMFFGNLNSCMNPWLWFHFNRKQLKRACPCRKSSEPLIQSLVYVHVMTSEQSDF.

At 19–48 (HNLYLFQMLELQENITDSQPMDPPSLEIMM) the chain is on the extracellular side. N-linked (GlcNAc...) asparagine glycosylation is present at N32. Residues 49 to 69 (LHHLMIILVTLFGNTLLIYVI) traverse the membrane as a helical segment. The Cytoplasmic segment spans residues 70 to 95 (YKNNAVLRRKRVTPVQMLMLHMCAAD). The chain crosses the membrane as a helical span at residues 96-116 (ILFALISVGPTMAITATVPFF). Residues 117-124 (YGPNLLCK) lie on the Extracellular side of the membrane. The cysteines at positions 123 and 196 are disulfide-linked. A helical membrane pass occupies residues 125 to 145 (LTKFLQVIPMYASSFLLVAIS). Over 146–168 (ADRYQAICRPLASMKSSIYNRPA) the chain is Cytoplasmic. A helical membrane pass occupies residues 169 to 189 (LYSGIAWTAAILFSTPQLYLF). At 190–207 (EKRNGDCSENYTTALQYQ) the chain is on the extracellular side. The N-linked (GlcNAc...) asparagine glycan is linked to N199. A helical membrane pass occupies residues 208–228 (LYVCLFNSVVWLLPSAIAGWL). Over 229–289 (YLCVCKAVWK…DRRRVQTVKL (61 aa)) the chain is Cytoplasmic. The chain crosses the membrane as a helical span at residues 290 to 310 (TLTIVAANFVLWAPFCITSVI). Over 311–320 (DAVWPTAINS) the chain is Extracellular. A glycan (N-linked (GlcNAc...) asparagine) is linked at N319. Residues 321-343 (TFATYIMFFGNLNSCMNPWLWFH) form a helical membrane-spanning segment. Residues 344–379 (FNRKQLKRACPCRKSSEPLIQSLVYVHVMTSEQSDF) are Cytoplasmic-facing.

It belongs to the G-protein coupled receptor 1 family. Vasopressin/oxytocin receptor subfamily. In terms of tissue distribution, detected in the left ASE gustatory neuron, the chemosensory neuron pairs ASH and ADF, and the PQR tail neuron. In males, detected in hook and tail sensory neurons involved in vulval sensing and hermaphrodite contact, and in spicule protractor muscles.

It is found in the cell membrane. In terms of biological role, receptor for nematocin. The activity of this receptor is mediated by G proteins which activate a phosphatidylinositol-calcium second messenger system. The activity of this receptor may be modulated by ntr-2, leading to reduced intracellular cAMP production. Plays a role in gustatory associative learning. Also plays a role in male mating behavior. In Caenorhabditis elegans, this protein is Nematocin receptor 1.